The sequence spans 553 residues: Glucose-6-phosphate isomerase (553 aa).

Residues Gly-164 to Ser-165, Ser-215 to Thr-220, Gln-359, Glu-363, His-394, and Lys-516 contribute to the D-glucose 6-phosphate site. Glu-363 serves as the catalytic Proton donor. Active-site residues include His-394 and Lys-516.

It belongs to the GPI family. Homodimer.

The protein localises to the cytoplasm. It localises to the cytosol. It catalyses the reaction alpha-D-glucose 6-phosphate = beta-D-fructose 6-phosphate. It functions in the pathway carbohydrate degradation; glycolysis; D-glyceraldehyde 3-phosphate and glycerone phosphate from D-glucose: step 2/4. In the cytoplasm, catalyzes the conversion of glucose-6-phosphate to fructose-6-phosphate, the second step in glycolysis, and the reverse reaction during gluconeogenesis. This Aspergillus oryzae (strain ATCC 42149 / RIB 40) (Yellow koji mold) protein is Glucose-6-phosphate isomerase (pgiA).